The chain runs to 906 residues: NADH-quinone oxidoreductase subunit G (906 aa).

The region spanning alanine 2 to glutamate 83 is the 2Fe-2S ferredoxin-type domain. Cysteine 34, cysteine 45, cysteine 48, and cysteine 67 together coordinate [2Fe-2S] cluster. Residues glutamate 83–lysine 122 form the 4Fe-4S His(Cys)3-ligated-type domain. Histidine 99, cysteine 103, cysteine 106, cysteine 112, cysteine 151, cysteine 154, cysteine 157, cysteine 201, cysteine 228, cysteine 231, cysteine 235, and cysteine 263 together coordinate [4Fe-4S] cluster. In terms of domain architecture, 4Fe-4S Mo/W bis-MGD-type spans methionine 221 to threonine 277.

The protein belongs to the complex I 75 kDa subunit family. Composed of 13 different subunits. Subunits NuoCD, E, F, and G constitute the peripheral sector of the complex. It depends on [2Fe-2S] cluster as a cofactor. Requires [4Fe-4S] cluster as cofactor.

The enzyme catalyses a quinone + NADH + 5 H(+)(in) = a quinol + NAD(+) + 4 H(+)(out). NDH-1 shuttles electrons from NADH, via FMN and iron-sulfur (Fe-S) centers, to quinones in the respiratory chain. Couples the redox reaction to proton translocation (for every two electrons transferred, four hydrogen ions are translocated across the cytoplasmic membrane), and thus conserves the redox energy in a proton gradient. In Buchnera aphidicola subsp. Acyrthosiphon pisum (strain APS) (Acyrthosiphon pisum symbiotic bacterium), this protein is NADH-quinone oxidoreductase subunit G (nuoG).